The chain runs to 127 residues: MSKAAEVIEIIKGMTALELKELKELFEETFGVTAAAPVAVAAAPAAGAAAAAPAAEEKTEFDVILKNPGANKIAVIKVVRELTGLGLKEAKDLVDGAPKPVKEKVSKADADAAAEKLKEAGAEVEVK.

It belongs to the bacterial ribosomal protein bL12 family. As to quaternary structure, homodimer. Part of the ribosomal stalk of the 50S ribosomal subunit. Forms a multimeric L10(L12)X complex, where L10 forms an elongated spine to which 2 to 4 L12 dimers bind in a sequential fashion. Binds GTP-bound translation factors.

Forms part of the ribosomal stalk which helps the ribosome interact with GTP-bound translation factors. Is thus essential for accurate translation. The polypeptide is Large ribosomal subunit protein bL12 (Symbiobacterium thermophilum (strain DSM 24528 / JCM 14929 / IAM 14863 / T)).